A 157-amino-acid chain; its full sequence is Protein snakeskin (157 aa).

The Cytoplasmic segment spans residues 2 to 6 (VSVQT). The helical transmembrane segment at 7-27 (IATIVVKTFKIVLNIIILVLY) threads the bilayer. Residues 28–53 (RTGYNGEFLGVGGTWNLNEEKNPDAE) lie on the Extracellular side of the membrane. A helical transmembrane segment spans residues 54–74 (IVASGVIVGYLIYTLVQIVTF). The Cytoplasmic segment spans residues 75–87 (LFGTTEHKRALSE). The chain crosses the membrane as a helical span at residues 88 to 108 (IVMNFVGVFLWIAVGAVALHY). The Extracellular segment spans residues 109 to 130 (WGGYQGEHQFQFVFAEKQVGLA). Residues 131-151 (VGALCVINGAIYLLDTALSVI) traverse the membrane as a helical segment. Over 152–157 (HFTKEM) the chain is Cytoplasmic.

Expressed in midgut epithelium (at protein level).

It is found in the apicolateral cell membrane. Its subcellular location is the cell junction. The protein localises to the septate junction. Its function is as follows. Required for assembly of smooth septate junctions (sSJs). May be important for barrier function of the midgut epithelium. The sequence is that of Protein snakeskin from Bombyx mori (Silk moth).